A 64-amino-acid chain; its full sequence is Large ribosomal subunit protein bL35 (64 aa).

A disordered region spans residues 1-28 (MPKMKTHSGAKKRFKLTGSGKLKRQQAN).

It belongs to the bacterial ribosomal protein bL35 family.

This Renibacterium salmoninarum (strain ATCC 33209 / DSM 20767 / JCM 11484 / NBRC 15589 / NCIMB 2235) protein is Large ribosomal subunit protein bL35.